We begin with the raw amino-acid sequence, 484 residues long: tRNA-2-methylthio-N(6)-dimethylallyladenosine synthase (484 aa).

The region spanning 36 to 153 (GKLYIKTHGC…LPELIRARRE (118 aa)) is the MTTase N-terminal domain. [4Fe-4S] cluster is bound by residues C45, C82, C116, C190, C194, and C197. Residues 176 to 415 (RAEGPSAFVS…HINAHAASIS (240 aa)) enclose the Radical SAM core domain. One can recognise a TRAM domain in the interval 416-479 (QSMVGSVQRV…SNSLRGRIQL (64 aa)). Residues 428–450 (EGPSRRDPNELTGKSENMRPVNF) are disordered.

This sequence belongs to the methylthiotransferase family. MiaB subfamily. Monomer. The cofactor is [4Fe-4S] cluster.

The protein resides in the cytoplasm. The enzyme catalyses N(6)-dimethylallyladenosine(37) in tRNA + (sulfur carrier)-SH + AH2 + 2 S-adenosyl-L-methionine = 2-methylsulfanyl-N(6)-dimethylallyladenosine(37) in tRNA + (sulfur carrier)-H + 5'-deoxyadenosine + L-methionine + A + S-adenosyl-L-homocysteine + 2 H(+). Its function is as follows. Catalyzes the methylthiolation of N6-(dimethylallyl)adenosine (i(6)A), leading to the formation of 2-methylthio-N6-(dimethylallyl)adenosine (ms(2)i(6)A) at position 37 in tRNAs that read codons beginning with uridine. This Xanthomonas axonopodis pv. citri (strain 306) protein is tRNA-2-methylthio-N(6)-dimethylallyladenosine synthase.